The primary structure comprises 347 residues: Cell division protein FtsQ (347 aa).

A disordered region spans residues 1–55 (MARNGNPQFPDERSTATRAKATEPEELDDRFSDLEPEEDSPFLRSQKRVPVRRGP). Topologically, residues 1–66 (MARNGNPQFP…PSKKAANRVK (66 aa)) are cytoplasmic. Residues 10–33 (PDERSTATRAKATEPEELDDRFSD) show a composition bias toward basic and acidic residues. Residues 67–87 (IALIVLGVLVVIGGVWMALSA) traverse the membrane as a helical segment. Over 88–347 (YGEHSWRFRL…PTAHTSGRRH (260 aa)) the chain is Periplasmic. One can recognise a POTRA domain in the interval 98–166 (ESSDSIEVGG…DRIRVQVTER (69 aa)). The tract at residues 308–347 (DSHPSAAKPTAPAVAPAVEKPAVAKPAVAKPTAHTSGRRH) is disordered. The span at 313 to 340 (AAKPTAPAVAPAVEKPAVAKPAVAKPTA) shows a compositional bias: low complexity.

The protein belongs to the FtsQ/DivIB family. FtsQ subfamily.

The protein localises to the cell inner membrane. Functionally, essential cell division protein. The polypeptide is Cell division protein FtsQ (Koribacter versatilis (strain Ellin345)).